A 347-amino-acid chain; its full sequence is MRVTKRDLKHNREGEISLTPETLDDLWHLKYIIEKGDLVFSLTKRKADNAADKLRPEKAEKKTVRLGVRVEDVEFHKFSNRLRVHGLIEHGMDAGFYHTLNIEDGTNLSITKYWKKDQLERVNEAEAASKRPKVILVAIEEGDADIGFVRHYGIEIYSHITQSSGKGEGTLREVFFSTILDQLTHAMSGTESVVVSGPGFTKDDFMKYASSKNSDLVAGILVEDTSSIGMSGFQEVLRRGAVDRIMEESRIARESSLMDSLLKEIALDGKVAYGMDEVKQAIDFGAVETLLVADEMLRLERESGNIDGLIQNVERSQGKMVVFSTEFEPGQRLHSLGGIAAILRFKV.

It belongs to the eukaryotic release factor 1 family. Pelota subfamily. Monomer. Requires a divalent metal cation as cofactor.

It localises to the cytoplasm. May function in recognizing stalled ribosomes, interact with stem-loop structures in stalled mRNA molecules, and effect endonucleolytic cleavage of the mRNA. May play a role in the release non-functional ribosomes and degradation of damaged mRNAs. Has endoribonuclease activity. This Methanococcoides burtonii (strain DSM 6242 / NBRC 107633 / OCM 468 / ACE-M) protein is Protein pelota homolog.